The sequence spans 970 residues: Unconventional myosin-XIX (970 aa).

The Myosin motor domain maps to 35-758; the sequence is YKLDDLTRVN…MLELLECGRA (724 aa). An ATP-binding site is contributed by 132–139; it reads GESGAGKT. The actin-binding stretch occupies residues 602–624; it reads LEQLLQVLHSTTPHYIRCIKPNS. Position 685 is a phosphoserine (S685). 2 consecutive IQ domains span residues 759-779 and 783-812; these read RVLE…RHRE and QWRA…AATV. Residues 824-970 form a myMOMA region region; sequence MACLAAKELD…VTSSAFTGLG (147 aa).

Belongs to the TRAFAC class myosin-kinesin ATPase superfamily. Myosin family. In terms of assembly, myosin is a hexamer of 2 heavy chains and 4 light chains: interacts with myosin light chains MYL9 and MYL12B. As to expression, widely expressed in multiple tissues and cell lines.

The protein resides in the mitochondrion outer membrane. It localises to the cytoplasm. Its subcellular location is the cytoskeleton. Its function is as follows. Actin-based motor molecule with ATPase activity that localizes to the mitochondrion outer membrane. Motor protein that moves towards the plus-end of actin filaments. Required for mitochondrial inheritance during mitosis. May be involved in mitochondrial transport or positioning. The sequence is that of Unconventional myosin-XIX from Homo sapiens (Human).